Consider the following 387-residue polypeptide: S-adenosylmethionine synthase (387 aa).

His-15 serves as a coordination point for ATP. Mg(2+) is bound at residue Asp-17. Glu-43 contributes to the K(+) binding site. The L-methionine site is built by Glu-56 and Gln-99. Residues 99–109 (QSPDIAQGVNA) are flexible loop. Residues 166 to 168 (DAK), 232 to 233 (RF), Asp-241, 247 to 248 (RK), Ala-264, and Lys-268 contribute to the ATP site. Asp-241 serves as a coordination point for L-methionine. Lys-272 serves as a coordination point for L-methionine.

Belongs to the AdoMet synthase family. As to quaternary structure, homotetramer; dimer of dimers. The cofactor is Mg(2+). It depends on K(+) as a cofactor.

The protein localises to the cytoplasm. The enzyme catalyses L-methionine + ATP + H2O = S-adenosyl-L-methionine + phosphate + diphosphate. The protein operates within amino-acid biosynthesis; S-adenosyl-L-methionine biosynthesis; S-adenosyl-L-methionine from L-methionine: step 1/1. Its function is as follows. Catalyzes the formation of S-adenosylmethionine (AdoMet) from methionine and ATP. The overall synthetic reaction is composed of two sequential steps, AdoMet formation and the subsequent tripolyphosphate hydrolysis which occurs prior to release of AdoMet from the enzyme. This is S-adenosylmethionine synthase from Dechloromonas aromatica (strain RCB).